Consider the following 334-residue polypeptide: Dihydroorotate dehydrogenase (quinone) (334 aa).

FMN-binding positions include 59–63 (AGLDK) and Thr-83. Position 63 (Lys-63) interacts with substrate. 108-112 (NRMGF) is a binding site for substrate. 2 residues coordinate FMN: Asn-136 and Asn-169. Asn-169 lines the substrate pocket. Ser-172 functions as the Nucleophile in the catalytic mechanism. Position 174 (Asn-174) interacts with substrate. Positions 214 and 242 each coordinate FMN. 243–244 (NT) provides a ligand contact to substrate. FMN is bound by residues Gly-265, Gly-294, and 315 to 316 (YS).

It belongs to the dihydroorotate dehydrogenase family. Type 2 subfamily. As to quaternary structure, monomer. Requires FMN as cofactor.

Its subcellular location is the cell membrane. The enzyme catalyses (S)-dihydroorotate + a quinone = orotate + a quinol. Its pathway is pyrimidine metabolism; UMP biosynthesis via de novo pathway; orotate from (S)-dihydroorotate (quinone route): step 1/1. Its function is as follows. Catalyzes the conversion of dihydroorotate to orotate with quinone as electron acceptor. In Acinetobacter baumannii (strain AB0057), this protein is Dihydroorotate dehydrogenase (quinone).